The primary structure comprises 495 residues: Glycerol kinase (495 aa).

An ADP-binding site is contributed by Thr11. ATP is bound by residues Thr11, Thr12, and Ser13. Thr11 provides a ligand contact to sn-glycerol 3-phosphate. Arg15 is an ADP binding site. Residues Arg81, Glu82, Tyr133, and Asp242 each contribute to the sn-glycerol 3-phosphate site. 5 residues coordinate glycerol: Arg81, Glu82, Tyr133, Asp242, and Gln243. Residues Thr264 and Gly307 each coordinate ADP. ATP contacts are provided by Thr264, Gly307, Gln311, and Gly408. 2 residues coordinate ADP: Gly408 and Asn412.

Belongs to the FGGY kinase family.

It catalyses the reaction glycerol + ATP = sn-glycerol 3-phosphate + ADP + H(+). It participates in polyol metabolism; glycerol degradation via glycerol kinase pathway; sn-glycerol 3-phosphate from glycerol: step 1/1. Its activity is regulated as follows. Inhibited by fructose 1,6-bisphosphate (FBP). Its function is as follows. Key enzyme in the regulation of glycerol uptake and metabolism. Catalyzes the phosphorylation of glycerol to yield sn-glycerol 3-phosphate. This Acinetobacter baylyi (strain ATCC 33305 / BD413 / ADP1) protein is Glycerol kinase.